The chain runs to 187 residues: Ribosome-recycling factor (187 aa).

Belongs to the RRF family.

Its subcellular location is the cytoplasm. Functionally, responsible for the release of ribosomes from messenger RNA at the termination of protein biosynthesis. May increase the efficiency of translation by recycling ribosomes from one round of translation to another. This chain is Ribosome-recycling factor, found in Rhodopseudomonas palustris (strain BisB18).